Reading from the N-terminus, the 341-residue chain is tRNA N6-adenosine threonylcarbamoyltransferase (341 aa).

2 residues coordinate Fe cation: His-115 and His-119. Residues 138-142 (VVSGG), Asp-171, Gly-184, Asp-188, and Asn-279 contribute to the substrate site. A Fe cation-binding site is contributed by Asp-307.

This sequence belongs to the KAE1 / TsaD family. Fe(2+) serves as cofactor.

It localises to the cytoplasm. The enzyme catalyses L-threonylcarbamoyladenylate + adenosine(37) in tRNA = N(6)-L-threonylcarbamoyladenosine(37) in tRNA + AMP + H(+). Its function is as follows. Required for the formation of a threonylcarbamoyl group on adenosine at position 37 (t(6)A37) in tRNAs that read codons beginning with adenine. Is involved in the transfer of the threonylcarbamoyl moiety of threonylcarbamoyl-AMP (TC-AMP) to the N6 group of A37, together with TsaE and TsaB. TsaD likely plays a direct catalytic role in this reaction. The sequence is that of tRNA N6-adenosine threonylcarbamoyltransferase from Clostridium kluyveri (strain NBRC 12016).